The following is a 375-amino-acid chain: tRNA/tmRNA (uracil-C(5))-methyltransferase (375 aa).

Residues glutamine 197, tyrosine 225, asparagine 230, glutamate 246, and aspartate 306 each coordinate S-adenosyl-L-methionine. The active-site Nucleophile is the cysteine 331. The active-site Proton acceptor is glutamate 365.

The protein belongs to the class I-like SAM-binding methyltransferase superfamily. RNA M5U methyltransferase family. TrmA subfamily.

It catalyses the reaction uridine(54) in tRNA + S-adenosyl-L-methionine = 5-methyluridine(54) in tRNA + S-adenosyl-L-homocysteine + H(+). The catalysed reaction is uridine(341) in tmRNA + S-adenosyl-L-methionine = 5-methyluridine(341) in tmRNA + S-adenosyl-L-homocysteine + H(+). Its function is as follows. Dual-specificity methyltransferase that catalyzes the formation of 5-methyluridine at position 54 (m5U54) in all tRNAs, and that of position 341 (m5U341) in tmRNA (transfer-mRNA). The polypeptide is tRNA/tmRNA (uracil-C(5))-methyltransferase (Aliarcobacter butzleri (strain RM4018) (Arcobacter butzleri)).